A 546-amino-acid chain; its full sequence is Chaperonin GroEL (546 aa).

ATP is bound by residues 29–32, Lys50, 86–90, Gly414, 477–479, and Asp493; these read TLGP, DGTTT, and NAL. Positions 522 to 546 are disordered; it reads KPEKDAPNPMAGMGGGGMGGMGGMM. The span at 533–546 shows a compositional bias: gly residues; it reads GMGGGGMGGMGGMM.

It belongs to the chaperonin (HSP60) family. In terms of assembly, forms a cylinder of 14 subunits composed of two heptameric rings stacked back-to-back. Interacts with the co-chaperonin GroES.

It is found in the cytoplasm. It catalyses the reaction ATP + H2O + a folded polypeptide = ADP + phosphate + an unfolded polypeptide.. Together with its co-chaperonin GroES, plays an essential role in assisting protein folding. The GroEL-GroES system forms a nano-cage that allows encapsulation of the non-native substrate proteins and provides a physical environment optimized to promote and accelerate protein folding. This Leptospira borgpetersenii serovar Hardjo-bovis (strain JB197) protein is Chaperonin GroEL.